A 63-amino-acid polypeptide reads, in one-letter code: Arabinogalactan protein 41 (63 aa).

The first 27 residues, 1–27 (MSGSRLFFGVSTIVSIIFAILLPMAHA), serve as a signal peptide directing secretion. Position 28 is a pyrrolidone carboxylic acid (glutamine 28). A 4-hydroxyproline mark is found at proline 32, proline 34, and proline 36. Residues proline 32, proline 34, and proline 36 are each glycosylated (O-linked (Ara...) hydroxyproline). Serine 38 carries the GPI-anchor amidated serine lipid modification. The propeptide at 39-63 (DGTTIDQGIAYVLMLVALVLTYLIH) is removed in mature form.

Belongs to the AG-peptide AGP family. In terms of processing, contains 4-hydroxyproline; hydroxylated on Pro-32, Pro-34 and Pro-36. Post-translationally, O-glycosylated on hydroxyprolines; noncontiguous hydroxylproline residues are glycosylated with arabinogalactan.

The protein resides in the cell membrane. In terms of biological role, proteoglycan that seems to be implicated in diverse developmental roles such as differentiation, cell-cell recognition, embryogenesis and programmed cell death. The sequence is that of Arabinogalactan protein 41 from Arabidopsis thaliana (Mouse-ear cress).